Here is a 440-residue protein sequence, read N- to C-terminus: tRNA-2-methylthio-N(6)-dimethylallyladenosine synthase (440 aa).

The 117-residue stretch at 5–121 (KLLYLETFGC…LPELVRAAEK (117 aa)) folds into the MTTase N-terminal domain. The [4Fe-4S] cluster site is built by Cys14, Cys50, Cys84, Cys159, Cys163, and Cys166. The 231-residue stretch at 145–375 (RTDGVSRFVT…LDLQRRITLE (231 aa)) folds into the Radical SAM core domain. Residues 378–440 (KSFVGTVQQV…QNSLQGELCR (63 aa)) enclose the TRAM domain.

This sequence belongs to the methylthiotransferase family. MiaB subfamily. As to quaternary structure, monomer. The cofactor is [4Fe-4S] cluster.

It localises to the cytoplasm. It catalyses the reaction N(6)-dimethylallyladenosine(37) in tRNA + (sulfur carrier)-SH + AH2 + 2 S-adenosyl-L-methionine = 2-methylsulfanyl-N(6)-dimethylallyladenosine(37) in tRNA + (sulfur carrier)-H + 5'-deoxyadenosine + L-methionine + A + S-adenosyl-L-homocysteine + 2 H(+). Its function is as follows. Catalyzes the methylthiolation of N6-(dimethylallyl)adenosine (i(6)A), leading to the formation of 2-methylthio-N6-(dimethylallyl)adenosine (ms(2)i(6)A) at position 37 in tRNAs that read codons beginning with uridine. This Geotalea uraniireducens (strain Rf4) (Geobacter uraniireducens) protein is tRNA-2-methylthio-N(6)-dimethylallyladenosine synthase.